A 159-amino-acid polypeptide reads, in one-letter code: Nucleotide-binding protein Psyr_4087 (159 aa).

This sequence belongs to the YajQ family.

Functionally, nucleotide-binding protein. The sequence is that of Nucleotide-binding protein Psyr_4087 from Pseudomonas syringae pv. syringae (strain B728a).